A 1547-amino-acid polypeptide reads, in one-letter code: Mediator of RNA polymerase II transcription subunit 12 (1547 aa).

2 disordered regions span residues 1–63 and 1356–1509; these read MTSR…RPHI and PVIP…QQRD. Positions 1357 to 1369 are enriched in pro residues; the sequence is VIPPLEPPQPPNP. Over residues 1379–1390 the composition is skewed to polar residues; the sequence is YQSPQMTSNTAA. Low complexity-rich tracts occupy residues 1398–1413 and 1446–1468; these read QQQQQSQTLQPSQQTQ and LSPLQQMQHMQQLQGLAQQRASQ. Composition is skewed to polar residues over residues 1469-1480 and 1499-1509; these read PSPIHSQRPTSV and AHTSYVNQQRD.

Belongs to the Mediator complex subunit 12 family. Component of the SRB8-11 complex, which itself associates with the Mediator complex.

Its subcellular location is the nucleus. Component of the SRB8-11 complex. The SRB8-11 complex is a regulatory module of the Mediator complex which is itself involved in regulation of basal and activated RNA polymerase II-dependent transcription. The SRB8-11 complex may be involved in the transcriptional repression of a subset of genes regulated by Mediator. It may inhibit the association of the Mediator complex with RNA polymerase II to form the holoenzyme complex. This Phaeosphaeria nodorum (strain SN15 / ATCC MYA-4574 / FGSC 10173) (Glume blotch fungus) protein is Mediator of RNA polymerase II transcription subunit 12 (SRB8).